The sequence spans 191 residues: Guanylate kinase (191 aa).

Residues 4 to 182 enclose the Guanylate kinase-like domain; that stretch reads GRLIVVSGPS…AREEMIEIMR (179 aa). 11 to 18 provides a ligand contact to ATP; the sequence is GPSGAGKS.

Belongs to the guanylate kinase family.

It localises to the cytoplasm. The catalysed reaction is GMP + ATP = GDP + ADP. In terms of biological role, essential for recycling GMP and indirectly, cGMP. This chain is Guanylate kinase, found in Rubrobacter xylanophilus (strain DSM 9941 / JCM 11954 / NBRC 16129 / PRD-1).